Here is a 164-residue protein sequence, read N- to C-terminus: MTEAAPTRIYVDADACPVKDEIYRVAERHGLPVSVVAGSFIRVPTHPLIERIAAGSGMDAADDWIAERVQPGDIVVTADVPLASRCVKAGAEVLAPNGKPFSEESIGMTLAVRNLMTDLRSSGEITGGPRGFTPRDRSAFLAALDTTIRRIARRRPSPPAQPQT.

It belongs to the UPF0178 family.

The protein is UPF0178 protein RPB_3201 of Rhodopseudomonas palustris (strain HaA2).